A 499-amino-acid polypeptide reads, in one-letter code: Nucleoside transporter 2 (499 aa).

The Cytoplasmic segment spans residues 1 to 30; sequence MTGQSAAVEGSNSALPWYRMGFHTLAEFNT. 5 helical membrane passes run 31–51, 112–132, 133–153, 179–199, and 212–232; these read YVTF…VTSA, LFLG…VPAA, TIPT…MGGL, WGLT…QVSM, and IYFG…VLLR. Positions 255–267 are enriched in basic and acidic residues; sequence VEPEESQDSKEPA. The interval 255–276 is disordered; it reads VEPEESQDSKEPATGDVAEAPK. The N-linked (GlcNAc...) asparagine glycan is linked to asparagine 326. 5 consecutive transmembrane segments (helical) span residues 350 to 370, 378 to 398, 406 to 426, 428 to 448, and 475 to 495; these read LCAF…FFLV, MTII…LLMI, KLVI…VLCV, GFIP…LTNG, and MLAG…SLAI.

This sequence belongs to the SLC29A/ENT transporter (TC 2.A.57) family.

The protein resides in the cell membrane. It is found in the cell projection. The protein localises to the cilium. Its subcellular location is the flagellum. The catalysed reaction is inosine(in) + H(+)(in) = inosine(out) + H(+)(out). It carries out the reaction guanosine(in) + H(+)(in) = guanosine(out) + H(+)(out). It catalyses the reaction xanthosine(in) + H(+)(in) = xanthosine(out) + H(+)(out). Its function is as follows. High affinity nucleoside:H(+) symporter; transports inosine and guanosine. Can transport xanthosine. This is Nucleoside transporter 2 from Leishmania donovani.